Consider the following 162-residue polypeptide: Ribosome maturation factor RimP (162 aa).

The protein belongs to the RimP family.

It localises to the cytoplasm. Its function is as follows. Required for maturation of 30S ribosomal subunits. The protein is Ribosome maturation factor RimP of Leptospira borgpetersenii serovar Hardjo-bovis (strain JB197).